The primary structure comprises 1279 residues: Photoreceptor cilium actin regulator (1279 aa).

G2 is lipidated: N-myristoyl glycine. A lipid anchor (S-palmitoyl cysteine) is attached at C3. Disordered stretches follow at residues 101–168, 380–598, 802–821, 860–1107, and 1127–1279; these read NKPQ…KGRV, AAQV…SHVE, EVSE…ENLP, ASHP…TTAK, and KSSS…KEIS. A compositionally biased stretch (basic and acidic residues) spans 126 to 168; that stretch reads FSGKESKENTPQETSKGNRESVCHQPDSQDHCRQSATESKGRV. The segment covering 477-491 has biased composition (acidic residues); it reads SEEEDCSPEEEDELS. Composition is skewed to basic and acidic residues over residues 535 to 547 and 580 to 598; these read LKMK…RIKF and GPER…SHVE. Positions 804–818 are enriched in acidic residues; sequence SESEDISGDVEEDLE. Composition is skewed to polar residues over residues 886–901, 913–925, and 955–965; these read GSGS…SGST, DLNS…PSSE, and TNPTPGQSRTL. A compositionally biased stretch (basic and acidic residues) spans 972 to 990; sequence FSRDPHSSEASRKGPERSL. Residues 1047–1062 are compositionally biased toward polar residues; that stretch reads RKTTSPPCQHPQSNPA. Residues 1076–1090 show a composition bias toward low complexity; sequence PSSASCSSPSVSPSR. The span at 1091-1100 shows a compositional bias: basic and acidic residues; that stretch reads GSKDSIHSED. Polar residues predominate over residues 1226-1241; it reads WNNSRVPELQGSSTKR. The segment covering 1259–1279 has biased composition (basic and acidic residues); the sequence is RMNRGQDRPQPESQPQHKEIS.

In terms of tissue distribution, specifically expressed in retina.

It localises to the cell projection. It is found in the cilium. The protein resides in the photoreceptor outer segment. The protein localises to the photoreceptor inner segment. Functionally, plays an essential role for normal photoreceptor cell maintenance and vision. The sequence is that of Photoreceptor cilium actin regulator from Mus musculus (Mouse).